Reading from the N-terminus, the 239-residue chain is Probable transcriptional regulatory protein BPUM_0743 (239 aa).

This sequence belongs to the TACO1 family. YeeN subfamily.

It localises to the cytoplasm. The polypeptide is Probable transcriptional regulatory protein BPUM_0743 (Bacillus pumilus (strain SAFR-032)).